The sequence spans 515 residues: Sugar transport protein MST4 (515 aa).

Over 1-17 (MAGGFSVSGSGVEFEAK) the chain is Cytoplasmic. A helical transmembrane segment spans residues 18–38 (ITPIVIISCIMAATGGLMFGY). The Extracellular segment spans residues 39–78 (DVGISGGVTSMDDFLREFFPTVLKKKHEDKESNYCKYDNQ). A helical membrane pass occupies residues 79–99 (GLQLFTSSLYLAGLTATFFAS). Over 100 to 108 (YTTRRLGRR) the chain is Cytoplasmic. A helical transmembrane segment spans residues 109-129 (LTMLIAGVFFIVGVIFNGAAQ). Residues 130–138 (NLAMLIVGR) lie on the Extracellular side of the membrane. A helical transmembrane segment spans residues 139 to 159 (ILLGCGVGFANQAVPLFLSEI). The Cytoplasmic portion of the chain corresponds to 160–165 (APTRIR). The helical transmembrane segment at 166–186 (GGLNILFQLNVTIGILFANLV) threads the bilayer. The Extracellular portion of the chain corresponds to 187 to 199 (NYGTAKIHPWGWR). The helical transmembrane segment at 200 to 220 (LSLSLAGIPAALLTLGALFVV) threads the bilayer. Residues 221–280 (DTPNSLIERGRLEEGKAVLRKIRGTDNVEPEFNEIVEASRVAQEVKHPFRNLLQRRNRPQ) lie on the Cytoplasmic side of the membrane. The helical transmembrane segment at 281–301 (LVIAVLLQIFQQFTGINAIMF) threads the bilayer. Topologically, residues 302-315 (YAPVLFNTLGFKTD) are extracellular. A helical transmembrane segment spans residues 316–336 (ASLYSAVITGAVNVLSTLVSV). Residues 337–347 (YSVDRVGRRML) are Cytoplasmic-facing. A helical transmembrane segment spans residues 348-368 (LLEAGVQMFLSQVAIAVVLGI). Over 369–379 (KVTDRSDNLGH) the chain is Extracellular. A helical transmembrane segment spans residues 380 to 400 (GWAIMVVVMVCTFVSSFAWSW). At 401–422 (GPLGWLIPSETFPLETRSAGQS) the chain is on the cytoplasmic side. Residues 423 to 443 (VTVCVNLLFTFVIAQAFLSML) form a helical membrane-spanning segment. Residues 444-448 (CHLKY) are Extracellular-facing. Residues 449 to 469 (AIFAFFSAWVVVMSLFVLFFL) form a helical membrane-spanning segment. Residues 470–515 (PETKNIPIEEMTERVWKQHWFWKRFMDDADKHHVVPNGGKSNGATV) lie on the Cytoplasmic side of the membrane.

This sequence belongs to the major facilitator superfamily. Sugar transporter (TC 2.A.1.1) family. In terms of tissue distribution, expressed in roots, shoots, leaf blades, leaf sheaths, anthers, ovaries and embryos.

The protein resides in the membrane. Its function is as follows. Mediates active uptake of hexoses by sugar:proton symport. Can transport glucose, fructose, mannose and galactose. Can transport xylose and ribose. This chain is Sugar transport protein MST4, found in Oryza sativa subsp. japonica (Rice).